Reading from the N-terminus, the 859-residue chain is Catenin delta-1 (859 aa).

Positions 15-44 form a coiled coil; that stretch reads SVRAQEAQFELLSRALEEERRHVTAQLDRV. Residues 226–254 are disordered; sequence IDGPDYATTGRRGANGGDPRRRLRSYEDP. Positions 243-254 are enriched in basic and acidic residues; sequence DPRRRLRSYEDP. ARM repeat units follow at residues 279–317, 320–359, 363–401, 402–446, 464–503, 513–552, 574–614, 621–660, 661–700, and 701–746; these read APNS…HLSY, EDVK…NLSY, RENK…VTGT, LWNL…RVEG, LRNI…LVDS, LRNI…VRRG, AQGY…NLCA, RCIR…NLCG, DNRN…CVIN, and TIHE…GFCL.

The protein belongs to the beta-catenin family. As to quaternary structure, interacts with C-cadherin and with zbtb33. Ubiquitously expressed.

It localises to the cell junction. Its subcellular location is the adherens junction. The protein resides in the cytoplasm. The protein localises to the nucleus. It is found in the cell membrane. In terms of biological role, key regulator of cell-cell adhesion that associates with and regulates the cell adhesion properties of both C-, E- and N-cadherins, being critical for their surface stability. Beside cell-cell adhesion, regulates gene transcription through several transcription factors including ZBTB33/Kaiso2 and GLIS2, and the activity of Rho family GTPases and downstream cytoskeletal dynamics. Implicated both in cell transformation by SRC and in ligand-induced receptor signaling through the EGF, PDGF, CSF-1 and ERBB2 receptors. Required for gastrulation, axial elongation and development of the craniofacial skeleton and eye. This is Catenin delta-1 (ctnnd1) from Xenopus laevis (African clawed frog).